The primary structure comprises 476 residues: Ribulose bisphosphate carboxylase large chain (476 aa).

Positions 1–2 are excised as a propeptide; the sequence is MS. P3 is modified (N-acetylproline). K14 bears the N6,N6,N6-trimethyllysine mark. Residues N123 and T173 each coordinate substrate. K175 functions as the Proton acceptor in the catalytic mechanism. K177 is a binding site for substrate. 3 residues coordinate Mg(2+): K201, D203, and E204. At K201 the chain carries N6-carboxylysine. Residue H294 is the Proton acceptor of the active site. Substrate contacts are provided by R295, H327, and S379.

The protein belongs to the RuBisCO large chain family. Type I subfamily. In terms of assembly, heterohexadecamer of 8 large chains and 8 small chains; disulfide-linked. The disulfide link is formed within the large subunit homodimers. Mg(2+) serves as cofactor. Post-translationally, the disulfide bond which can form in the large chain dimeric partners within the hexadecamer appears to be associated with oxidative stress and protein turnover.

The protein localises to the plastid. It localises to the chloroplast. The enzyme catalyses 2 (2R)-3-phosphoglycerate + 2 H(+) = D-ribulose 1,5-bisphosphate + CO2 + H2O. It catalyses the reaction D-ribulose 1,5-bisphosphate + O2 = 2-phosphoglycolate + (2R)-3-phosphoglycerate + 2 H(+). RuBisCO catalyzes two reactions: the carboxylation of D-ribulose 1,5-bisphosphate, the primary event in carbon dioxide fixation, as well as the oxidative fragmentation of the pentose substrate in the photorespiration process. Both reactions occur simultaneously and in competition at the same active site. The protein is Ribulose bisphosphate carboxylase large chain of Setaria italica (Foxtail millet).